Consider the following 102-residue polypeptide: RNA-binding protein Hfq (102 aa).

A Sm domain is found at 9 to 68 (DPFLNALRRERVPVSIYLVNGIKLQGQIESFDQFVILLKNTVSQMVYKHAISTVVPSRPV). Residues 63–102 (VPSRPVSHHSNNAGGGASNNYHHGSNAQGSTAQQDSEETE) form a disordered region. The span at 70–88 (HHSNNAGGGASNNYHHGSN) shows a compositional bias: low complexity.

Belongs to the Hfq family. Homohexamer.

Its function is as follows. RNA chaperone that binds small regulatory RNA (sRNAs) and mRNAs to facilitate mRNA translational regulation in response to envelope stress, environmental stress and changes in metabolite concentrations. Also binds with high specificity to tRNAs. This Salmonella agona (strain SL483) protein is RNA-binding protein Hfq.